A 453-amino-acid chain; its full sequence is Probable 1,4-beta-D-glucan cellobiohydrolase A (453 aa).

Positions 1-17 (MYQRALLFSALATAVSA) are cleaved as a signal peptide. Glutamate 226 serves as the catalytic Nucleophile. Glutamate 231 serves as the catalytic Proton donor. Asparagine 284 carries N-linked (GlcNAc...) asparagine glycosylation.

This sequence belongs to the glycosyl hydrolase 7 (cellulase C) family.

It is found in the secreted. It carries out the reaction Hydrolysis of (1-&gt;4)-beta-D-glucosidic linkages in cellulose and cellotetraose, releasing cellobiose from the non-reducing ends of the chains.. Its function is as follows. The biological conversion of cellulose to glucose generally requires three types of hydrolytic enzymes: (1) Endoglucanases which cut internal beta-1,4-glucosidic bonds; (2) Exocellobiohydrolases that cut the disaccharide cellobiose from the non-reducing end of the cellulose polymer chain; (3) Beta-1,4-glucosidases which hydrolyze the cellobiose and other short cello-oligosaccharides to glucose. This is Probable 1,4-beta-D-glucan cellobiohydrolase A (cbhA) from Aspergillus clavatus (strain ATCC 1007 / CBS 513.65 / DSM 816 / NCTC 3887 / NRRL 1 / QM 1276 / 107).